Here is a 128-residue protein sequence, read N- to C-terminus: Large ribosomal subunit protein mL51 (128 aa).

A mitochondrion-targeting transit peptide spans 1-31; sequence MAGNLLSGAGRRLWDWVPLACRSFSLGVPRL.

It belongs to the mitochondrion-specific ribosomal protein mL51 family. Component of the mitochondrial large ribosomal subunit (mt-LSU). Mature mammalian 55S mitochondrial ribosomes consist of a small (28S) and a large (39S) subunit. The 28S small subunit contains a 12S ribosomal RNA (12S mt-rRNA) and 30 different proteins. The 39S large subunit contains a 16S rRNA (16S mt-rRNA), a copy of mitochondrial valine transfer RNA (mt-tRNA(Val)), which plays an integral structural role, and 52 different proteins. Interacts with OXA1L.

The protein resides in the mitochondrion. The polypeptide is Large ribosomal subunit protein mL51 (MRPL51) (Homo sapiens (Human)).